The following is a 253-amino-acid chain: Kallikrein-7 (253 aa).

Residues 1–22 (MARSLLLPLQILLLSLALETAG) form the signal peptide. The propeptide at 23 to 29 (EEAQGDK) is activation peptide. The 221-residue stretch at 30-250 (IIDGAPCARG…FTKWINDTMK (221 aa)) folds into the Peptidase S1 domain. Cystine bridges form between C36/C165, C55/C71, C137/C239, C144/C211, C176/C190, and C201/C226. Catalysis depends on charge relay system residues H70 and D112. The active-site Charge relay system is S205. N246 carries N-linked (GlcNAc...) asparagine glycosylation.

Belongs to the peptidase S1 family. Kallikrein subfamily. As to expression, abundantly expressed in the skin and is expressed by keratinocytes in the epidermis. Also expressed in the brain, mammary gland, cerebellum, spinal cord and kidney. Lower levels in salivary glands, uterus, thymus, thyroid, placenta, trachea and testis. Up-regulated in ovarian carcinoma, especially late-stage serous carcinoma, compared with normal ovaries and benign adenomas (at protein level).

Its subcellular location is the secreted. The catalysed reaction is Cleavage of proteins with aromatic side chains in the P1 position.. Its activity is regulated as follows. Inhibited by Zn2+ and Cu2+ at low micromolar concentrations. Inhibited by SERPINA12. Its function is as follows. May catalyze the degradation of intercellular cohesive structures in the cornified layer of the skin in the continuous shedding of cells from the skin surface. Specific for amino acid residues with aromatic side chains in the P1 position. Cleaves insulin A chain at '14-Tyr-|-Gln-15' and insulin B chain at '6-Leu-|-Cys-7', '16-Tyr-|-Leu-17', '25-Phe-|-Tyr-26' and '26-Tyr-|-Thr-27'. Could play a role in the activation of precursors to inflammatory cytokines. This Homo sapiens (Human) protein is Kallikrein-7 (KLK7).